A 247-amino-acid chain; its full sequence is ATP synthase subunit a, chloroplastic (247 aa).

5 helical membrane passes run 38–58, 95–115, 134–154, 199–219, and 220–240; these read QVLI…VIAV, VPFI…GALL, INTT…AGLS, LVVV…VMFL, and GLFT…AYIG.

The protein belongs to the ATPase A chain family. In terms of assembly, F-type ATPases have 2 components, CF(1) - the catalytic core - and CF(0) - the membrane proton channel. CF(1) has five subunits: alpha(3), beta(3), gamma(1), delta(1), epsilon(1). CF(0) has four main subunits: a, b, b' and c.

It is found in the plastid. The protein resides in the chloroplast thylakoid membrane. Key component of the proton channel; it plays a direct role in the translocation of protons across the membrane. The protein is ATP synthase subunit a, chloroplastic of Lolium perenne (Perennial ryegrass).